Reading from the N-terminus, the 278-residue chain is Bis(5'-nucleosyl)-tetraphosphatase, symmetrical (278 aa).

The protein belongs to the Ap4A hydrolase family.

The catalysed reaction is P(1),P(4)-bis(5'-adenosyl) tetraphosphate + H2O = 2 ADP + 2 H(+). In terms of biological role, hydrolyzes diadenosine 5',5'''-P1,P4-tetraphosphate to yield ADP. This Nitrosococcus oceani (strain ATCC 19707 / BCRC 17464 / JCM 30415 / NCIMB 11848 / C-107) protein is Bis(5'-nucleosyl)-tetraphosphatase, symmetrical.